Here is a 580-residue protein sequence, read N- to C-terminus: Cytochrome P450 monooxygenase helB1 (580 aa).

The tract at residues 1–32 (MRTYAIRPVSNRLPGPIEPKKHRRDRDNSTTG) is disordered. Residue asparagine 28 is glycosylated (N-linked (GlcNAc...) asparagine). A helical transmembrane segment spans residues 61–81 (FLNTISVLQVLAAIFIGALTY). A heme-binding site is contributed by cysteine 497.

It belongs to the cytochrome P450 family. It depends on heme as a cofactor.

It is found in the membrane. It functions in the pathway mycotoxin biosynthesis. Cytochrome P450 monooxygenase; part of the gene cluster that mediates the biosynthesis of helvolic acid, an antibacterial nortriterpenoid. Protostadienol synthase helA cyclizes (3S)-oxidosqualene to (17Z)-protosta-17(20),24-dien-3-beta-ol (protostadienol). The synthesis of protostadienol is followed by several steps of monooxygenation, dehydrogenation, and acyl transfer to yield the final helvolic acid. Following the cyclization to the tetracyclic protostadienol by helA, cytochrome P450 monooxygenases helB1-mediated and helB2-mediated oxidation at C-4 and C-16, acyltransferase helD2-dependent acetylation of 16-OH, oxidation of C-21 by cytochrome P450 monooxygenase helB4, and short chain dehydrogenase helC-dependent oxidative decarboxylation yield the fusidane skeleton. This intermediate is further modified in three additional steps mediated by the cytochrome P450 monooxygenase helB3, the acyltransferase helD1, and the 3-ketosteroid 1-dehydrogenase helE to give helvolic acid. Compared with the late stages in the biosynthesis of helvolic acid, enzymes involved in the early stage modifications act in a relatively strict order. The hydroxylation of C-16 by helB1 and subsequent acetylation by helD2 should occur before the helB3-mediated oxidation of C-21. C-4 demethylation in fusidane-type antibiotics proceeds in an unusual manner though it is also achieved by oxidative decarboxylation. The methyl group at C-4 beta position is oxidized by helB1 and subsequently removed by the short chain dehydrogenase helC. This chain is Cytochrome P450 monooxygenase helB1, found in Aspergillus fumigatus (strain ATCC MYA-4609 / CBS 101355 / FGSC A1100 / Af293) (Neosartorya fumigata).